A 37-amino-acid polypeptide reads, in one-letter code: Photosystem I reaction center subunit IX (37 aa).

The helical transmembrane segment at 4–24 (FLSSAPVLLTAMMVFTAGLLI) threads the bilayer.

The protein belongs to the PsaJ family.

It is found in the cellular thylakoid membrane. In terms of biological role, may help in the organization of the PsaE and PsaF subunits. In Picosynechococcus sp. (strain ATCC 27264 / PCC 7002 / PR-6) (Agmenellum quadruplicatum), this protein is Photosystem I reaction center subunit IX.